Reading from the N-terminus, the 346-residue chain is Phosphoribosylformylglycinamidine cyclo-ligase (346 aa).

This sequence belongs to the AIR synthase family.

It localises to the cytoplasm. It carries out the reaction 2-formamido-N(1)-(5-O-phospho-beta-D-ribosyl)acetamidine + ATP = 5-amino-1-(5-phospho-beta-D-ribosyl)imidazole + ADP + phosphate + H(+). The protein operates within purine metabolism; IMP biosynthesis via de novo pathway; 5-amino-1-(5-phospho-D-ribosyl)imidazole from N(2)-formyl-N(1)-(5-phospho-D-ribosyl)glycinamide: step 2/2. The chain is Phosphoribosylformylglycinamidine cyclo-ligase from Bacillus cereus (strain ZK / E33L).